The primary structure comprises 343 residues: N-acetyl-gamma-glutamyl-phosphate reductase (343 aa).

The active site involves C146.

Belongs to the NAGSA dehydrogenase family. Type 1 subfamily.

The protein resides in the cytoplasm. It catalyses the reaction N-acetyl-L-glutamate 5-semialdehyde + phosphate + NADP(+) = N-acetyl-L-glutamyl 5-phosphate + NADPH + H(+). The protein operates within amino-acid biosynthesis; L-arginine biosynthesis; N(2)-acetyl-L-ornithine from L-glutamate: step 3/4. Catalyzes the NADPH-dependent reduction of N-acetyl-5-glutamyl phosphate to yield N-acetyl-L-glutamate 5-semialdehyde. The chain is N-acetyl-gamma-glutamyl-phosphate reductase from Pseudarthrobacter chlorophenolicus (strain ATCC 700700 / DSM 12829 / CIP 107037 / JCM 12360 / KCTC 9906 / NCIMB 13794 / A6) (Arthrobacter chlorophenolicus).